Reading from the N-terminus, the 202-residue chain is uncharacterized protein (202 aa).

The chain crosses the membrane as a helical span at residues 10-30; the sequence is TAAIFLLCCTSVIILFTIAVV.

Belongs to the bacterial sugar transferase family.

It is found in the cell membrane. In terms of biological role, may be involved in the production of the exopolysaccharide (EPS) component of the extracellular matrix during biofilm formation. EPS is responsible for the adhesion of chains of cells into bundles. This is an uncharacterized protein from Bacillus subtilis (strain 168).